A 202-amino-acid chain; its full sequence is Hypoxanthine-guanine phosphoribosyltransferase (202 aa).

Diphosphate-binding residues include Lys66 and Gly67. Mg(2+) is bound by residues Glu122 and Asp123. The Proton acceptor role is filled by Asp126. Residues Lys154, 175–176 (FV), and Asp182 contribute to the GMP site. Diphosphate is bound at residue Arg188.

This sequence belongs to the purine/pyrimidine phosphoribosyltransferase family. It depends on Mg(2+) as a cofactor.

The protein resides in the cytoplasm. It catalyses the reaction IMP + diphosphate = hypoxanthine + 5-phospho-alpha-D-ribose 1-diphosphate. The catalysed reaction is GMP + diphosphate = guanine + 5-phospho-alpha-D-ribose 1-diphosphate. It functions in the pathway purine metabolism; IMP biosynthesis via salvage pathway; IMP from hypoxanthine: step 1/1. Its pathway is purine metabolism; GMP biosynthesis via salvage pathway; GMP from guanine: step 1/1. Functionally, purine salvage pathway enzyme that catalyzes the transfer of the ribosyl-5-phosphate group from 5-phospho-alpha-D-ribose 1-diphosphate (PRPP) to the N9 position of the 6-oxopurines hypoxanthine and guanine to form the corresponding ribonucleotides IMP (inosine 5'-monophosphate) and GMP (guanosine 5'-monophosphate), with the release of PPi. The protein is Hypoxanthine-guanine phosphoribosyltransferase (hpt) of Mycobacterium tuberculosis (strain CDC 1551 / Oshkosh).